A 163-amino-acid polypeptide reads, in one-letter code: Bacterial microcompartment assembly protein PduM (163 aa).

Belongs to the PduM family. As to quaternary structure, interacts with shell protein PduK.

Its subcellular location is the bacterial microcompartment. The protein operates within polyol metabolism; 1,2-propanediol degradation. Plays an essential role in assembly and/or stability of the bacterial microcompartment (BMC) dedicated to 1,2-propanediol (1,2-PD) degradation. Functionally, expression of a cosmid containing the full 21-gene pdu operon in E.coli allows E.coli to grow on 1,2-propanediol (1,2-PD) with the appearance of bacterial microcompartments (BMC) in its cytoplasm. Its function is as follows. The 1,2-PD-specific bacterial microcompartment (BMC) concentrates low levels of 1,2-PD catabolic enzymes, concentrates volatile reaction intermediates thus enhancing pathway flux and keeps the level of toxic, mutagenic propionaldehyde low. This Citrobacter freundii protein is Bacterial microcompartment assembly protein PduM.